Here is a 185-residue protein sequence, read N- to C-terminus: Casparian strip membrane protein 5 (185 aa).

Residues 1-25 (MKAEAVESGEASTIIAAPKRGINRG) are Cytoplasmic-facing. A helical transmembrane segment spans residues 26 to 46 (ISIADLILRGVAAIGTFASAL). Over 47 to 75 (TMGTTSETLTIFTQPIMIRAKYNDLPSLT) the chain is Extracellular. The chain crosses the membrane as a helical span at residues 76–96 (FFVIANSIVCGYLVLSIPLSI). Over 97–108 (SHFIRREARITR) the chain is Cytoplasmic. Residues 109 to 129 (IILVIFDTAMVELLTAGASAA) traverse the membrane as a helical segment. Topologically, residues 130 to 160 (TVVVYLAHKRNANWLAICQQFNNFCERISGS) are extracellular. A helical membrane pass occupies residues 161–181 (LIGSFASIIMIMLIIITSAVA). Topologically, residues 182–185 (LSRH) are cytoplasmic.

The protein belongs to the Casparian strip membrane proteins (CASP) family. Homodimer and heterodimers.

It localises to the cell membrane. Its function is as follows. Regulates membrane-cell wall junctions and localized cell wall deposition. Required for establishment of the Casparian strip membrane domain (CSD) and the subsequent formation of Casparian strips, a cell wall modification of the root endodermis that determines an apoplastic barrier between the intraorganismal apoplasm and the extraorganismal apoplasm and prevents lateral diffusion. The chain is Casparian strip membrane protein 5 from Populus trichocarpa (Western balsam poplar).